A 561-amino-acid chain; its full sequence is DNA ligase (561 aa).

Glu-253 serves as a coordination point for ATP. Lys-255 (N6-AMP-lysine intermediate) is an active-site residue. Arg-260, Arg-275, Glu-304, Phe-344, Arg-421, and Lys-427 together coordinate ATP.

Belongs to the ATP-dependent DNA ligase family. Mg(2+) serves as cofactor.

It catalyses the reaction ATP + (deoxyribonucleotide)n-3'-hydroxyl + 5'-phospho-(deoxyribonucleotide)m = (deoxyribonucleotide)n+m + AMP + diphosphate.. DNA ligase that seals nicks in double-stranded DNA during DNA replication, DNA recombination and DNA repair. The chain is DNA ligase from Halobacterium salinarum (strain ATCC 29341 / DSM 671 / R1).